A 450-amino-acid polypeptide reads, in one-letter code: Benzene 1,2-dioxygenase subunit alpha (450 aa).

Residues 54-163 (WLLLGHETQI…VETYKGLIFA (110 aa)) form the Rieske domain. The [2Fe-2S] cluster site is built by C96, H98, C116, and H119. H222 and H228 together coordinate Fe cation.

This sequence belongs to the bacterial ring-hydroxylating dioxygenase alpha subunit family. In terms of assembly, this dioxygenase system consists of four proteins: the two subunits of the hydroxylase component (BnzA and BnzB), a ferredoxin (BnzC) and a ferredoxin reductase (BnzD). [2Fe-2S] cluster is required as a cofactor. It depends on Fe cation as a cofactor.

It carries out the reaction benzene + NADH + O2 + H(+) = cis-1,2-dihydrobenzene-1,2-diol + NAD(+). The enzyme catalyses toluene + NADH + O2 + H(+) = (1S,2R)-3-methylcyclohexa-3,5-diene-1,2-diol + NAD(+). Its pathway is aromatic compound metabolism; benzene degradation; catechol from benzene: step 1/2. The protein operates within xenobiotic degradation; toluene degradation. It functions in the pathway xenobiotic degradation; xylene degradation. Catalyzes both the oxidation of benzene and toluene. This is Benzene 1,2-dioxygenase subunit alpha (bnzA) from Pseudomonas putida (strain ATCC 700007 / DSM 6899 / JCM 31910 / BCRC 17059 / LMG 24140 / F1).